The sequence spans 450 residues: Homogentisate 1,2-dioxygenase (450 aa).

The active-site Proton acceptor is the histidine 304. Residues histidine 347 and glutamate 353 each coordinate Fe cation. Tyrosine 362 and histidine 383 together coordinate homogentisate. Residue histidine 383 participates in Fe cation binding.

Belongs to the homogentisate dioxygenase family. As to quaternary structure, hexamer; dimer of trimers. It depends on Fe cation as a cofactor.

The enzyme catalyses homogentisate + O2 = 4-maleylacetoacetate + H(+). It functions in the pathway amino-acid degradation; L-phenylalanine degradation; acetoacetate and fumarate from L-phenylalanine: step 4/6. In terms of biological role, involved in the catabolism of homogentisate (2,5-dihydroxyphenylacetate or 2,5-OH-PhAc), a central intermediate in the degradation of phenylalanine and tyrosine. Catalyzes the oxidative ring cleavage of the aromatic ring of homogentisate to yield maleylacetoacetate. This Burkholderia mallei (strain NCTC 10229) protein is Homogentisate 1,2-dioxygenase.